The sequence spans 88 residues: Small ribosomal subunit protein bS20 (88 aa).

This sequence belongs to the bacterial ribosomal protein bS20 family.

Functionally, binds directly to 16S ribosomal RNA. The sequence is that of Small ribosomal subunit protein bS20 from Clostridium botulinum (strain 657 / Type Ba4).